A 413-amino-acid polypeptide reads, in one-letter code: Protein MANNAN SYNTHESIS-RELATED (413 aa).

Residues 1–5 (MNSME) lie on the Cytoplasmic side of the membrane. Residues 6–26 (IRQAFAGLLTLSMFIMLGNMI) form a helical; Signal-anchor for type II membrane protein membrane-spanning segment. The Lumenal segment spans residues 27–413 (KKDHFDYPAE…KNHLAYKCFC (387 aa)). Asn-207 is a glycosylation site (N-linked (GlcNAc...) asparagine). 255–257 (DLR) contacts substrate.

Belongs to the glycosyltransferase GT106 family. As to expression, highly and specifically expressed in the endosperm.

The protein localises to the golgi apparatus membrane. It participates in glycan biosynthesis. Glycosyltransferase involved in mannan biosynthesis. This Trigonella foenum-graecum (Fenugreek) protein is Protein MANNAN SYNTHESIS-RELATED.